We begin with the raw amino-acid sequence, 261 residues long: uncharacterized protein (261 aa).

A divalent metal cation is bound by residues Asp43, His45, Asp75, Asn106, His197, and His199.

This sequence belongs to the metallophosphoesterase superfamily. A divalent metal cation serves as cofactor.

This is an uncharacterized protein from Aquifex aeolicus (strain VF5).